The primary structure comprises 245 residues: 1-(5-phosphoribosyl)-5-[(5-phosphoribosylamino)methylideneamino] imidazole-4-carboxamide isomerase (245 aa).

Residue Asp8 is the Proton acceptor of the active site. The Proton donor role is filled by Asp130.

It belongs to the HisA/HisF family.

It localises to the cytoplasm. It catalyses the reaction 1-(5-phospho-beta-D-ribosyl)-5-[(5-phospho-beta-D-ribosylamino)methylideneamino]imidazole-4-carboxamide = 5-[(5-phospho-1-deoxy-D-ribulos-1-ylimino)methylamino]-1-(5-phospho-beta-D-ribosyl)imidazole-4-carboxamide. Its pathway is amino-acid biosynthesis; L-histidine biosynthesis; L-histidine from 5-phospho-alpha-D-ribose 1-diphosphate: step 4/9. The chain is 1-(5-phosphoribosyl)-5-[(5-phosphoribosylamino)methylideneamino] imidazole-4-carboxamide isomerase from Teredinibacter turnerae (strain ATCC 39867 / T7901).